A 759-amino-acid polypeptide reads, in one-letter code: Cullin-4A (759 aa).

Lysine 8 is covalently cross-linked (Glycyl lysine isopeptide (Lys-Gly) (interchain with G-Cter in SUMO2)). Serine 10 carries the phosphoserine modification. Lysine 33 is covalently cross-linked (Glycyl lysine isopeptide (Lys-Gly) (interchain with G-Cter in ubiquitin)). The region spanning 691 to 751 (DRQYQIDAAI…RDYMERDKDN (61 aa)) is the Cullin neddylation domain. Residue lysine 705 forms a Glycyl lysine isopeptide (Lys-Gly) (interchain with G-Cter in NEDD8) linkage.

Belongs to the cullin family. As to quaternary structure, can self-associate. Component of multiple DCX (DDB1-CUL4-X-box) E3 ubiquitin-protein ligase complexes that seem to consist of DDB1, CUL4A or CUL4B, RBX1 and a variable substrate recognition component which seems to belong to a protein family described as DCAF (Ddb1- and Cul4-associated factor) or CDW (CUL4-DDB1-associated WD40-repeat) proteins. Component of the CSA complex (DCX(ERCC8) complex) containing ERCC8, RBX1, DDB1 and CUL4A; the CSA complex interacts with RNA polymerase II; upon UV irradiation it interacts with the COP9 signalosome and preferentially with the hyperphosphorylated form of RNA polymerase II. Component of the DCX(DET1-COP1) complex with the substrate recognition component DET1 and COP1. Component of the DCX(DDB2) complex with the substrate recognition component DDB2. Component of the DCX(DTL) complex with the putative substrate recognition component DTL. Component of DCX complexes part of the DesCEND (destruction via C-end degrons) pathway, which contain either TRPC4AP or DCAF12 as substrate-recognition component. Component of the DCX(AMBRA1) complex with the substrate recognition component AMBRA1. Interacts with DDB1, RBX1, RNF7, CDT1, TIP120A/CAND1, SKP2, CDKN1B, MDM2, TP53 and HOXA9. Interacts with DDB2; the interactions with DDB2 and CAND1 are mutually exclusive. Interacts with DCAF1, DTL, DDA1, DCAF6, DCAF4, DCAF16, DCAF17, DET1, WDTC1, DCAF5, DCAF11, WDR24A, COP1, PAFAH1B1, ERCC8, GRWD1, FBXW5, RBBP7, GNB2, WSB1, WSB2, NUP43, PWP1, FBXW8, ATG16L1, KATNB1, RBBP4, RBBP5, LRWD1 and DCAF8. May interact with WDR26, WDR51B, SNRNP40, WDR61, WDR76, WDR5. Interacts (when neddylated) with ARIH1; leading to activate the E3 ligase activity of ARIH1. The DDB1-CUL4A complex interacts with CRY1. Interacts (unneddylated form) with DCUN1D1, DCUN1D2, DCUN1D3, DCUN1D4 and DCUN1D5; these interactions promote the cullin neddylation. In terms of assembly, (Microbial infection) Interacts with Epstein-Barr virus BPLF1. Neddylated; required for activity of cullin-RING-based E3 ubiquitin-protein ligase complexes. Deneddylated via its interaction with the COP9 signalosome (CSN) complex. In terms of processing, (Microbial infection) Deneddylated by Epstein-Barr virus BPLF1 leading to a S-phase-like environment that is required for efficient replication of the viral genome.

It participates in protein modification; protein ubiquitination. Its function is as follows. Core component of multiple cullin-RING-based E3 ubiquitin-protein ligase complexes which mediate the ubiquitination of target proteins. As a scaffold protein may contribute to catalysis through positioning of the substrate and the ubiquitin-conjugating enzyme. The E3 ubiquitin-protein ligase activity of the complex is dependent on the neddylation of the cullin subunit and is inhibited by the association of the deneddylated cullin subunit with TIP120A/CAND1. The functional specificity of the E3 ubiquitin-protein ligase complex depends on the variable substrate recognition component. DCX(DET1-COP1) directs ubiquitination of JUN. DCX(DDB2) directs ubiquitination of XPC. DCX(DDB2) ubiquitinates histones H3-H4 and is required for efficient histone deposition during replication-coupled (H3.1) and replication-independent (H3.3) nucleosome assembly, probably by facilitating the transfer of H3 from ASF1A/ASF1B to other chaperones involved in histone deposition. DCX(DTL) plays a role in PCNA-dependent polyubiquitination of CDT1 and MDM2-dependent ubiquitination of p53/TP53 in response to radiation-induced DNA damage and during DNA replication. DCX(DTL) directs autoubiquitination of DTL. In association with DDB1 and SKP2 probably is involved in ubiquitination of CDKN1B/p27kip. Is involved in ubiquitination of HOXA9. The DDB1-CUL4A-DTL E3 ligase complex regulates the circadian clock function by mediating the ubiquitination and degradation of CRY1. The DCX(ERCC8) complex (also named CSA complex) plays a role in transcription-coupled repair (TCR). A number of DCX complexes (containing either TRPC4AP or DCAF12 as substrate-recognition component) are part of the DesCEND (destruction via C-end degrons) pathway, which recognizes a C-degron located at the extreme C terminus of target proteins, leading to their ubiquitination and degradation. The DCX(AMBRA1) complex is a master regulator of the transition from G1 to S cell phase by mediating ubiquitination of phosphorylated cyclin-D (CCND1, CCND2 and CCND3). The DCX(AMBRA1) complex also acts as a regulator of Cul5-RING (CRL5) E3 ubiquitin-protein ligase complexes by mediating ubiquitination and degradation of Elongin-C (ELOC) component of CRL5 complexes. With CUL4B, contributes to ribosome biogenesis. This is Cullin-4A from Homo sapiens (Human).